Consider the following 478-residue polypeptide: MAEAATPKIGSVGRVTQVIGAVVDVAFEGELPKILNALETTNNGVRLVLEVAQHLGENEVRTIAMDSSEGLVRGQEVSDTGAPIMVPVGNETLGRIMNVIGEPVDEAGPLVTAHKRAIHQDAPSYVEQSTEAQILVTGIKVVDLLAPYARGGKIGLFGGAGVGKTVLIMELINNVAKAHGGYSVFAGVGERTREGNDLYHEMIESNVNKHGGGEGSKAALVYGQMNEPPGARARVALTGLTVAEHFRDQGQDVLFFVDNIFRFTQAGSEVSALLGRIPSAVGYQPTLATDMGQMQERITTTTTGSITSVQAIYVPADDLTDPAPATSFAHLDATTVLSRSIAEKGIYPAVDPLDSTSRMLDPMVVGEEHYEVARKVQSTLQRYKALQDIIAILGMDELSEEDKIAVARARKIERFLSQPFFVAEVFTGSPGKLVALEDTIKGFKGLVNGEYDHLPEAAFYMVGSMEEAIEKAKKLAAA.

ATP is bound at residue 158-165 (GGAGVGKT).

The protein belongs to the ATPase alpha/beta chains family. F-type ATPases have 2 components, CF(1) - the catalytic core - and CF(0) - the membrane proton channel. CF(1) has five subunits: alpha(3), beta(3), gamma(1), delta(1), epsilon(1). CF(0) has three main subunits: a(1), b(2) and c(9-12). The alpha and beta chains form an alternating ring which encloses part of the gamma chain. CF(1) is attached to CF(0) by a central stalk formed by the gamma and epsilon chains, while a peripheral stalk is formed by the delta and b chains.

The protein resides in the cell inner membrane. It catalyses the reaction ATP + H2O + 4 H(+)(in) = ADP + phosphate + 5 H(+)(out). In terms of biological role, produces ATP from ADP in the presence of a proton gradient across the membrane. The catalytic sites are hosted primarily by the beta subunits. This Rhizobium leguminosarum bv. trifolii (strain WSM2304) protein is ATP synthase subunit beta.